The sequence spans 317 residues: 4-hydroxy-3-methylbut-2-enyl diphosphate reductase (317 aa).

C12 lines the [4Fe-4S] cluster pocket. Residues H41 and H74 each contribute to the (2E)-4-hydroxy-3-methylbut-2-enyl diphosphate site. The dimethylallyl diphosphate site is built by H41 and H74. Residues H41 and H74 each coordinate isopentenyl diphosphate. [4Fe-4S] cluster is bound at residue C97. Position 125 (H125) interacts with (2E)-4-hydroxy-3-methylbut-2-enyl diphosphate. H125 is a dimethylallyl diphosphate binding site. H125 provides a ligand contact to isopentenyl diphosphate. The active-site Proton donor is the E127. T168 is a binding site for (2E)-4-hydroxy-3-methylbut-2-enyl diphosphate. C198 lines the [4Fe-4S] cluster pocket. S226, S227, N228, and S270 together coordinate (2E)-4-hydroxy-3-methylbut-2-enyl diphosphate. 4 residues coordinate dimethylallyl diphosphate: S226, S227, N228, and S270. Residues S226, S227, N228, and S270 each contribute to the isopentenyl diphosphate site.

It belongs to the IspH family. As to quaternary structure, homodimer. [4Fe-4S] cluster serves as cofactor.

It carries out the reaction isopentenyl diphosphate + 2 oxidized [2Fe-2S]-[ferredoxin] + H2O = (2E)-4-hydroxy-3-methylbut-2-enyl diphosphate + 2 reduced [2Fe-2S]-[ferredoxin] + 2 H(+). The enzyme catalyses dimethylallyl diphosphate + 2 oxidized [2Fe-2S]-[ferredoxin] + H2O = (2E)-4-hydroxy-3-methylbut-2-enyl diphosphate + 2 reduced [2Fe-2S]-[ferredoxin] + 2 H(+). The protein operates within isoprenoid biosynthesis; dimethylallyl diphosphate biosynthesis; dimethylallyl diphosphate from (2E)-4-hydroxy-3-methylbutenyl diphosphate: step 1/1. Its pathway is isoprenoid biosynthesis; isopentenyl diphosphate biosynthesis via DXP pathway; isopentenyl diphosphate from 1-deoxy-D-xylulose 5-phosphate: step 6/6. Catalyzes the conversion of 1-hydroxy-2-methyl-2-(E)-butenyl 4-diphosphate (HMBPP) into a mixture of isopentenyl diphosphate (IPP) and dimethylallyl diphosphate (DMAPP). Acts in the terminal step of the DOXP/MEP pathway for isoprenoid precursor biosynthesis. The polypeptide is 4-hydroxy-3-methylbut-2-enyl diphosphate reductase (Yersinia pseudotuberculosis serotype IB (strain PB1/+)).